The following is a 2351-amino-acid chain: Protein FAM186A (2351 aa).

Positions 296–340 form a coiled coil; sequence EAEKELSLKIIRDLSNENEMLQQKLQDAEEKCEQLIRSKIVIEQL. Disordered stretches follow at residues 412 to 460, 470 to 489, 505 to 538, 593 to 667, 809 to 838, 868 to 976, 1805 to 1837, and 1888 to 1907; these read ERTP…SWKR, ETSGPNLSDNKSGQKVSEAK, EMKSFSEDKSKSPTEAKRKHLSLTETKSQGGKSG, QFDD…SEQS, STVQKDHKEKEKQRQEQYLQEGQEQMSGMS, LQMK…RGLE, GGQSTSAQFPAPQAPPSPGQLPISRAPPTPGQP, and FQPPATAEQSPYLQAPSTPG. Residues 433–446 are compositionally biased toward basic and acidic residues; the sequence is DSTKDNVSLKKGDF. Residues 472–484 are compositionally biased toward polar residues; the sequence is SGPNLSDNKSGQK. The segment covering 506-520 has biased composition (basic and acidic residues); that stretch reads MKSFSEDKSKSPTEA. The span at 527–538 shows a compositional bias: polar residues; that stretch reads LTETKSQGGKSG. Residues 603-612 are compositionally biased toward basic residues; it reads GKIKGKKHHI. Composition is skewed to basic and acidic residues over residues 619-632 and 812-823; these read SKEEKTEEKEELTK and QKDHKEKEKQRQ. Residues 812–860 adopt a coiled-coil conformation; it reads QKDHKEKEKQRQEQYLQEGQEQMSGMSLKQQLLGERNLLKEHYEKISEN. The segment covering 824–838 has biased composition (polar residues); it reads EQYLQEGQEQMSGMS. Basic and acidic residues-rich tracts occupy residues 901 to 912, 939 to 955, and 964 to 976; these read AEQEEKQKQRGQ, LEKENGQMRQIQKEAKH, and KGKEKQKPERGLE. A compositionally biased stretch (pro residues) spans 1816 to 1835; it reads PQAPPSPGQLPISRAPPTPG. The span at 1894–1907 shows a compositional bias: polar residues; that stretch reads AEQSPYLQAPSTPG.

The protein belongs to the FAM186 family.

This is Protein FAM186A (FAM186A) from Homo sapiens (Human).